An 80-amino-acid polypeptide reads, in one-letter code: Putative membrane protein insertion efficiency factor (80 aa).

Residues 60–80 are disordered; sequence SKTGKDPVPDRFSLKRNQEGE. Basic and acidic residues predominate over residues 62–80; the sequence is TGKDPVPDRFSLKRNQEGE.

The protein belongs to the UPF0161 family.

It is found in the cell membrane. Its function is as follows. Could be involved in insertion of integral membrane proteins into the membrane. This is Putative membrane protein insertion efficiency factor from Streptococcus pneumoniae serotype 4 (strain ATCC BAA-334 / TIGR4).